The sequence spans 908 residues: Zinc finger CCCH domain-containing protein 41 (908 aa).

The segment covering 1–13 (MELSVSSPKQSVL) has biased composition (polar residues). Residues 1 to 124 (MELSVSSPKQ…GRGNYGSWAQ (124 aa)) are disordered. Acidic residues predominate over residues 20 to 34 (SDPEEEHEISEEEDD). Composition is skewed to polar residues over residues 48–59 (SQSLEQDSSDQA) and 90–105 (GQRVQFDNQRMRSNPM). The C3H1-type zinc-finger motif lies at 200-228 (GIPRQRCRDFEERGFCLRGDMCPMEHGMN). The disordered stretch occupies residues 333-375 (NVAPLDDSNQDAAENGCGIRDSRSTSQSVWGRMKGSNSQANSK). A compositionally biased stretch (polar residues) spans 356-373 (STSQSVWGRMKGSNSQAN). The RRM domain maps to 438–510 (RTLFVNYVPH…RFIKLWWANR (73 aa)). Disordered stretches follow at residues 558 to 590 (PTFQTGGAPSSSEQPKPVVVTTSGPKVTPLQQK), 629 to 695 (VVKR…KQRP), and 807 to 908 (RESN…QIHQ). Positions 559–588 (TFQTGGAPSSSEQPKPVVVTTSGPKVTPLQ) are enriched in polar residues. A coiled-coil region spans residues 587–630 (LQQKKADTLERLKETLRKKQEMLEQKRNEYRKKLATLEKQGTVV). Residues 630–647 (VKREEADEPDAKRVKLDT) are compositionally biased toward basic and acidic residues. Residue S657 is modified to Phosphoserine. Polar residues predominate over residues 677 to 688 (AKLSTETPSPDS). Over residues 807–828 (RESNNNNNNSNSLSVSRDNLSS) the composition is skewed to low complexity. The segment covering 846–863 (KTSSTEEPENTNVSGDND) has biased composition (polar residues). A compositionally biased stretch (basic and acidic residues) spans 865–886 (TLDKQETKESDNDNNKSNHESI). Positions 898 to 908 (TDEEQSEQIHQ) are enriched in acidic residues.

This Arabidopsis thaliana (Mouse-ear cress) protein is Zinc finger CCCH domain-containing protein 41.